A 399-amino-acid chain; its full sequence is MTTNTVSRKVAWLRVVTLAIAAFIFNTTEFAPVGLLSDIAGSFGMETAQVGMMLTIYAWVVALMSLPFMLLTSKMERRRLLIGLFILFIASHVLSFFAWSFDVLVISRIGIAFAHAVFWSITSALAIRMAPPGKRAQALSLIATGTALAMVFGIPIGRIIGQYFGWRMTFLAIGLGALATLACLVKLLPTLPSEHSGSLKSLPVLFRRPALVSVYILTVVVVTAHYTAYSYIEPFVQTVAGLSGNFATVLLLILGGAGIIGSILFGKLGNQHASGLISIAIGLLLACLLLLLPASDNAHHLMLLSIFWGVAIMIIGLGMQVKVLASAPDATDVAMSLFSGIFNIGIGAGALVGSQVSLHLSMASIGYIGAIPALAALVWSLMIFRRWPVSLEDHQPHHS.

12 consecutive transmembrane segments (helical) span residues 15–35 (VVTL…PVGL), 50–70 (VGMM…PFML), 81–101 (LIGL…AWSF), 103–123 (VLVI…SITS), 136–156 (AQAL…GIPI), 168–188 (MTFL…VKLL), 209–229 (PALV…YTAY), 246–266 (FATV…ILFG), 273–293 (ASGL…LLLP), 301–321 (LMLL…GMQV), 333–353 (VAMS…ALVG), and 364–384 (SIGY…LMIF).

The protein belongs to the major facilitator superfamily. SotB (TC 2.A.1.2) family.

The protein resides in the cell inner membrane. In terms of biological role, involved in the efflux of sugars. The physiological role may be the reduction of the intracellular concentration of toxic sugars or sugar metabolites. The protein is Probable sugar efflux transporter of Klebsiella pneumoniae (strain 342).